The sequence spans 753 residues: Lysyl oxidase homolog 3 (753 aa).

Residues 1 to 25 (MRPVSVWQWSPWGLLLCLLCSSCLG) form the signal peptide. 2 consecutive SRCR domains span residues 44 to 145 (FRLA…VICK) and 169 to 282 (VRIR…VSCV). 6 disulfides stabilise this stretch: cysteine 70–cysteine 134, cysteine 83–cysteine 144, cysteine 114–cysteine 124, cysteine 201–cysteine 271, cysteine 214–cysteine 281, and cysteine 248–cysteine 258. Asparagine 111 carries an N-linked (GlcNAc...) asparagine glycan. A glycan (N-linked (GlcNAc...) asparagine) is linked at asparagine 266. The span at 290-302 (SSGQKKQQQSKPQ) shows a compositional bias: low complexity. Residues 290–315 (SSGQKKQQQSKPQGEARVRLKGGAHP) form a disordered region. 2 consecutive SRCR domains span residues 307–407 (VRLK…VRCN) and 417–525 (IRLS…VICS). 11 cysteine pairs are disulfide-bonded: cysteine 332-cysteine 396, cysteine 345-cysteine 406, cysteine 376-cysteine 386, cysteine 446-cysteine 511, cysteine 459-cysteine 524, cysteine 492-cysteine 502, cysteine 554-cysteine 560, cysteine 606-cysteine 654, cysteine 638-cysteine 644, cysteine 666-cysteine 676, and cysteine 713-cysteine 727. 2 N-linked (GlcNAc...) asparagine glycosylation sites follow: asparagine 390 and asparagine 481. A lysyl-oxidase like region spans residues 529 to 732 (SDLLLHSALV…WVHNCHIGDA (204 aa)). Histidine 607, histidine 609, and histidine 611 together coordinate Cu cation. Asparagine 625 is a glycosylation site (N-linked (GlcNAc...) asparagine). Positions 634 to 670 (KASFCLEDTECQEDVSKRYECANFGEQGITVGCWDLY) form a cross-link, lysine tyrosylquinone (Lys-Tyr). Tyrosine 670 is modified (2',4',5'-topaquinone).

It belongs to the lysyl oxidase family. As to quaternary structure, interacts with STAT3. It depends on Cu cation as a cofactor. The cofactor is lysine tyrosylquinone residue. In terms of processing, the lysine tyrosylquinone cross-link (LTQ) is generated by condensation of the epsilon-amino group of a lysine with a topaquinone produced by oxidation of tyrosine. As to expression, isoform 1: Predominantly detected in the heart, placenta, lung, and small intestine. Isoform 2: Highly detected in the kidney, pancreas, spleen, and thymus, and is absent in lung. In eye, present in all layers of corneas as well as in the limbus and conjunctiva (at protein level).

It localises to the secreted. The protein resides in the extracellular space. Its subcellular location is the cytoplasm. The protein localises to the nucleus. It catalyses the reaction L-lysyl-[protein] + O2 + H2O = (S)-2-amino-6-oxohexanoyl-[protein] + H2O2 + NH4(+). The enzyme catalyses N(6)-acetyl-L-lysyl-[protein] + O2 + H2O = acetamide + (S)-2-amino-6-oxohexanoyl-[protein] + H2O2. Functionally, protein-lysine 6-oxidase that mediates the oxidation of peptidyl lysine residues to allysine in target proteins. Catalyzes the post-translational oxidative deamination of peptidyl lysine residues in precursors of elastin and different types of collagens, a prerequisite in the formation of cross-links between collagens and elastin. Required for somite boundary formation by catalyzing oxidation of fibronectin (FN1), enhancing integrin signaling in myofibers and their adhesion to the myotendinous junction (MTJ). Acts as a regulator of inflammatory response by inhibiting differentiation of naive CD4(+) T-cells into T-helper Th17 or regulatory T-cells (Treg): acts by interacting with STAT3 in the nucleus and catalyzing both deacetylation and oxidation of lysine residues on STAT3, leading to disrupt STAT3 dimerization and inhibit STAT3 transcription activity. Oxidation of lysine residues to allysine on STAT3 preferentially takes place on lysine residues that are acetylated. Also able to catalyze deacetylation of lysine residues on STAT3. Its function is as follows. Shows protein-lysine 6-oxidase activity toward elastin and different types of collagens, with the highest activity toward collagen type VIII. Shows protein-lysine 6-oxidase activity toward elastin and different types of collagens, with the highest activity toward collagen type IV. This is Lysyl oxidase homolog 3 from Homo sapiens (Human).